The primary structure comprises 96 residues: Protein RnfH (96 aa).

The protein belongs to the UPF0125 (RnfH) family.

The chain is Protein RnfH from Citrobacter koseri (strain ATCC BAA-895 / CDC 4225-83 / SGSC4696).